The following is a 328-amino-acid chain: Pantothenate kinase (328 aa).

Residues 1-12 (MAAPLNAQTRAP) show a composition bias toward polar residues. Residues 1–22 (MAAPLNAQTRAPQATGRAPDFS) are disordered. Position 113-120 (113-120 (GSVAVGKS)) interacts with ATP.

The protein belongs to the prokaryotic pantothenate kinase family.

The protein resides in the cytoplasm. It carries out the reaction (R)-pantothenate + ATP = (R)-4'-phosphopantothenate + ADP + H(+). It participates in cofactor biosynthesis; coenzyme A biosynthesis; CoA from (R)-pantothenate: step 1/5. This chain is Pantothenate kinase, found in Corynebacterium efficiens (strain DSM 44549 / YS-314 / AJ 12310 / JCM 11189 / NBRC 100395).